Here is a 285-residue protein sequence, read N- to C-terminus: Urease accessory protein UreD (285 aa).

This sequence belongs to the UreD family. As to quaternary structure, ureD, UreF and UreG form a complex that acts as a GTP-hydrolysis-dependent molecular chaperone, activating the urease apoprotein by helping to assemble the nickel containing metallocenter of UreC. The UreE protein probably delivers the nickel.

It localises to the cytoplasm. In terms of biological role, required for maturation of urease via the functional incorporation of the urease nickel metallocenter. The protein is Urease accessory protein UreD of Citrobacter koseri (strain ATCC BAA-895 / CDC 4225-83 / SGSC4696).